The following is a 777-amino-acid chain: Subtilisin-like protease SBT3.3 (777 aa).

The signal sequence occupies residues 1–24; it reads MRSFRSSILLVLLSLITVLNATRA. A propeptide spans 25 to 111 (removed in mature form); sequence RSETESKVHI…VIPDGFHELA (87 aa). An Inhibitor I9 domain is found at 32 to 109; that stretch reads VHIVYLGEKK…VHVIPDGFHE (78 aa). Residues 115–624 enclose the Peptidase S8 domain; sequence TWEYLGLSSA…GGIVNPEKAA (510 aa). Residue Asn131 is glycosylated (N-linked (GlcNAc...) asparagine). The active-site Charge relay system is the Asp145. N-linked (GlcNAc...) asparagine glycosylation is present at Asn204. His220 serves as the catalytic Charge relay system. Asn235, Asn397, Asn412, Asn508, and Asn540 each carry an N-linked (GlcNAc...) asparagine glycan. In terms of domain architecture, PA spans 403-481; it reads VCESLNLNPN…ELGTDILSYI (79 aa). Residue Ser555 is the Charge relay system of the active site. N-linked (GlcNAc...) asparagine glycosylation occurs at Asn647.

Belongs to the peptidase S8 family.

The protein localises to the secreted. Its subcellular location is the extracellular space. It is found in the extracellular matrix. Its function is as follows. Serine protease that plays a role in the control of the establishment of immune priming and systemic induced resistance. This chain is Subtilisin-like protease SBT3.3, found in Arabidopsis thaliana (Mouse-ear cress).